The following is a 1718-amino-acid chain: PR domain zinc finger protein 2 (1718 aa).

Positions 28 to 141 constitute an SET domain; that stretch reads EEVRLFPSAV…PGEELLVWYN (114 aa). Positions 155–335 are disordered; sequence ERASARSKRS…TSEETLEDCS (181 aa). Over residues 159–173 the composition is skewed to basic residues; the sequence is ARSKRSSPKSRKGKK. The segment covering 189 to 202 has biased composition (polar residues); it reads QLKTSEPDFTSANM. A compositionally biased stretch (basic and acidic residues) spans 204–216; sequence DSAEGPKEDEEKP. Over residues 265 to 297 the composition is skewed to acidic residues; the sequence is DLGEEEEEEEEEDEEEEEDDDDDELEDEGEEEA. Positions 294–316 are retinoblastoma protein binding; that stretch reads EEEASMPNENSVKEPEIRCDEKP. Residues 304-327 show a composition bias toward basic and acidic residues; sequence SVKEPEIRCDEKPEDLLEEPKTTS. Residue K347 forms a Glycyl lysine isopeptide (Lys-Gly) (interchain with G-Cter in SUMO2) linkage. 2 C2H2-type zinc fingers span residues 360 to 382 and 390 to 412; these read FPCQ…MHIH and FKCK…ERRH. Residues 405 to 457 are disordered; it reads RRRHERRHEAGLKRKPSQTLQPSEDLADGKASGENVASKDDSSPPSLGPDCLI. S421 is modified (phosphoserine). The C2H2-type 3 zinc-finger motif lies at 483–506; sequence HPCKYCKKVFGTHTNMRRHQRRVH. Disordered stretches follow at residues 513–550 and 622–660; these read KGVR…EGEA and EDLP…DPMV. Phosphoserine is present on S643. Residues K651, K690, and K692 each participate in a glycyl lysine isopeptide (Lys-Gly) (interchain with G-Cter in SUMO2) cross-link. Residues 729–797 are disordered; the sequence is TSSRFKRRTS…GRDERETVSP (69 aa). The segment covering 738–748 has biased composition (low complexity); that stretch reads SSPPSSPQHSP. S743 carries the post-translational modification Phosphoserine. K774 participates in a covalent cross-link: Glycyl lysine isopeptide (Lys-Gly) (interchain with G-Cter in SUMO2). Phosphoserine occurs at positions 781, 785, and 796. Residues K866 and K879 each participate in a glycyl lysine isopeptide (Lys-Gly) (interchain with G-Cter in SUMO2) cross-link. A disordered region spans residues 903 to 1083; the sequence is VENPADGTRS…SPPPLSAISS (181 aa). Residues 951 to 969 are compositionally biased toward low complexity; sequence LQTPSLSSGQLPPLLIPTD. 2 short sequence motifs (SH3-binding) span residues 970-979 and 985-998; these read PSSPPPCPPV and PPPP…LPAP. Positions 970–997 are enriched in pro residues; it reads PSSPPPCPPVLTVATPPPPLLPTVPLPA. A compositionally biased stretch (low complexity) spans 1018–1027; sequence SPLPILSPTV. Residues 1028–1038 are compositionally biased toward pro residues; that stretch reads SPSPSPIPPVE. An SH3-binding motif is present at residues 1028–1052; that stretch reads SPSPSPIPPVEPLMSAASPGPPTLS. Over residues 1042–1072 the composition is skewed to low complexity; that stretch reads SAASPGPPTLSSSSSSSSSSSSFSSSSSSSS. 3 C2H2-type zinc fingers span residues 1134–1156, 1162–1185, and 1191–1214; these read FVCN…LSIH, FKCE…FLLH, and FVCS…RDLH. Residues K1147 and K1151 each participate in a glycyl lysine isopeptide (Lys-Gly) (interchain with G-Cter in SUMO2) cross-link. The disordered stretch occupies residues 1244-1265; that stretch reads HMQSLPEDPLETSKEEEELNDS. A compositionally biased stretch (acidic residues) spans 1251 to 1265; it reads DPLETSKEEEELNDS. Residues K1257 and K1281 each participate in a glycyl lysine isopeptide (Lys-Gly) (interchain with G-Cter in SUMO2) cross-link. The C2H2-type 7; atypical zinc finger occupies 1333–1355; it reads IRCTKCGKGVDNMPELHKHILAC. The C2H2-type 8; atypical zinc finger occupies 1455 to 1478; that stretch reads HICPYCNREFTYIGSLNKHAAFSC. Disordered stretches follow at residues 1478–1576, 1589–1612, and 1625–1652; these read CPKK…LRNS, GKKP…RSLH, and KSTL…VTRS. The segment covering 1486–1498 has biased composition (basic residues); the sequence is PKKKVSHSSKKGG. Residues 1499–1511 are compositionally biased toward low complexity; the sequence is HSSPASSDKNSNS. Composition is skewed to polar residues over residues 1525–1556 and 1599–1608; these read QSMQ…SKQN and HSAQLSSKTS. The span at 1635–1645 shows a compositional bias: basic and acidic residues; it reads DRFNIKSRERS.

It belongs to the class V-like SAM-binding methyltransferase superfamily. As to quaternary structure, binds to the retinoblastoma protein (RB). Interacts with GATA3. Highly expressed in retinoblastoma cell lines and in brain tumors. Also expressed in a number of other cell lines and in brain, heart, skeletal muscle, liver and spleen. Isoform 1 is expressed in testis at much higher level than isoform 3.

The protein localises to the nucleus. It catalyses the reaction L-lysyl(9)-[histone H3] + 3 S-adenosyl-L-methionine = N(6),N(6),N(6)-trimethyl-L-lysyl(9)-[histone H3] + 3 S-adenosyl-L-homocysteine + 3 H(+). In terms of biological role, S-adenosyl-L-methionine-dependent histone methyltransferase that specifically methylates 'Lys-9' of histone H3. May function as a DNA-binding transcription factor. Binds to the macrophage-specific TPA-responsive element (MTE) of the HMOX1 (heme oxygenase 1) gene and may act as a transcriptional activator of this gene. The protein is PR domain zinc finger protein 2 (PRDM2) of Homo sapiens (Human).